We begin with the raw amino-acid sequence, 284 residues long: NAD(P)H-hydrate epimerase (284 aa).

A mitochondrion-targeting transit peptide spans 1 to 55 (MSGLRTLLGLGLLVSSSRFPRVVARGGPRCPGPAWWAARPMHLGDSTMAGGTVKY). Residues 61 to 271 (AQAVDEELFN…DLEKKYQLNL (211 aa)) form the YjeF N-terminal domain. 115–119 (NNGGD) provides a ligand contact to (6S)-NADPHX. A K(+)-binding site is contributed by N116. K140 carries the post-translational modification N6-succinyllysine. Residue D181 coordinates K(+). Residues 185–191 (GFSFKGA) and D214 contribute to the (6S)-NADPHX site. S217 is a K(+) binding site.

It belongs to the NnrE/AIBP family. In terms of assembly, homodimer. Interacts with APOA1 and APOA2. The cofactor is K(+). In terms of processing, undergoes physiological phosphorylation during sperm capacitation, downstream to PKA activation.

It is found in the mitochondrion. The protein localises to the secreted. It carries out the reaction (6R)-NADHX = (6S)-NADHX. The enzyme catalyses (6R)-NADPHX = (6S)-NADPHX. Its function is as follows. Catalyzes the epimerization of the S- and R-forms of NAD(P)HX, a damaged form of NAD(P)H that is a result of enzymatic or heat-dependent hydration. This is a prerequisite for the S-specific NAD(P)H-hydrate dehydratase to allow the repair of both epimers of NAD(P)HX. Accelerates cholesterol efflux from endothelial cells to high-density lipoprotein (HDL) and thereby regulates angiogenesis. The sequence is that of NAD(P)H-hydrate epimerase from Monodelphis domestica (Gray short-tailed opossum).